We begin with the raw amino-acid sequence, 143 residues long: Large ribosomal subunit protein uL11 (143 aa).

Belongs to the universal ribosomal protein uL11 family. Part of the ribosomal stalk of the 50S ribosomal subunit. Interacts with L10 and the large rRNA to form the base of the stalk. L10 forms an elongated spine to which L12 dimers bind in a sequential fashion forming a multimeric L10(L12)X complex. In terms of processing, one or more lysine residues are methylated.

Its function is as follows. Forms part of the ribosomal stalk which helps the ribosome interact with GTP-bound translation factors. This chain is Large ribosomal subunit protein uL11, found in Cutibacterium acnes (strain DSM 16379 / KPA171202) (Propionibacterium acnes).